We begin with the raw amino-acid sequence, 298 residues long: Ribosomal RNA small subunit methyltransferase A (298 aa).

S-adenosyl-L-methionine-binding residues include N35, L37, G62, E83, D108, and N133.

The protein belongs to the class I-like SAM-binding methyltransferase superfamily. rRNA adenine N(6)-methyltransferase family. RsmA subfamily.

It is found in the cytoplasm. It catalyses the reaction adenosine(1518)/adenosine(1519) in 16S rRNA + 4 S-adenosyl-L-methionine = N(6)-dimethyladenosine(1518)/N(6)-dimethyladenosine(1519) in 16S rRNA + 4 S-adenosyl-L-homocysteine + 4 H(+). Its function is as follows. Specifically dimethylates two adjacent adenosines (A1518 and A1519) in the loop of a conserved hairpin near the 3'-end of 16S rRNA in the 30S particle. May play a critical role in biogenesis of 30S subunits. This chain is Ribosomal RNA small subunit methyltransferase A, found in Streptococcus pyogenes serotype M12 (strain MGAS9429).